The chain runs to 306 residues: Transcription initiation factor IIB 2 (306 aa).

The segment at 6–37 (PKRVCPICGSTEFIYDPRRGEIVCAKCGYVIE) adopts a TFIIB-type zinc-finger fold. Residues C10, C13, C29, and C32 each contribute to the Zn(2+) site. Repeat copies occupy residues 123–206 (SELD…ARGL) and 217–298 (EYVD…ELVE).

Belongs to the TFIIB family.

Functionally, stabilizes TBP binding to an archaeal box-A promoter. Also responsible for recruiting RNA polymerase II to the pre-initiation complex (DNA-TBP-TFIIB). This is Transcription initiation factor IIB 2 from Thermococcus kodakarensis (strain ATCC BAA-918 / JCM 12380 / KOD1) (Pyrococcus kodakaraensis (strain KOD1)).